Consider the following 115-residue polypeptide: MNFVLALTINTLLALLLMILTFWLPQLNPYMEKSDPYECGFDPAYPARIPFSMKFFLVAITFLLFDLEIALLLPLPWALQTTNLPLMTTSSLMLIIILALGLTYEWSQKGLDWTE.

3 consecutive transmembrane segments (helical) span residues 3–23 (FVLA…LTFW), 55–75 (FFLV…LLPL), and 84–104 (LPLM…GLTY).

It belongs to the complex I subunit 3 family. In terms of assembly, core subunit of respiratory chain NADH dehydrogenase (Complex I) which is composed of 45 different subunits. Interacts with TMEM186. Interacts with TMEM242.

It is found in the mitochondrion inner membrane. It carries out the reaction a ubiquinone + NADH + 5 H(+)(in) = a ubiquinol + NAD(+) + 4 H(+)(out). Functionally, core subunit of the mitochondrial membrane respiratory chain NADH dehydrogenase (Complex I) which catalyzes electron transfer from NADH through the respiratory chain, using ubiquinone as an electron acceptor. Essential for the catalytic activity of complex I. The polypeptide is NADH-ubiquinone oxidoreductase chain 3 (Pongo pygmaeus (Bornean orangutan)).